A 338-amino-acid chain; its full sequence is tRNA pseudouridine synthase D (338 aa).

D79 acts as the Nucleophile in catalysis. Positions 154-303 (GVPNYFGEQR…EEAWRANILY (150 aa)) constitute a TRUD domain.

The protein belongs to the pseudouridine synthase TruD family.

The catalysed reaction is uridine(13) in tRNA = pseudouridine(13) in tRNA. In terms of biological role, responsible for synthesis of pseudouridine from uracil-13 in transfer RNAs. The sequence is that of tRNA pseudouridine synthase D from Legionella pneumophila (strain Lens).